The following is a 257-amino-acid chain: Pantothenate synthetase (257 aa).

An ATP-binding site is contributed by 29 to 36 (MGNLHAGH). His36 serves as the catalytic Proton donor. Residue Gln60 coordinates (R)-pantoate. Position 60 (Gln60) interacts with beta-alanine. 145–148 (GEKD) is a binding site for ATP. Residue Gln151 participates in (R)-pantoate binding. Residues Val174 and 182 to 185 (LSSR) each bind ATP.

The protein belongs to the pantothenate synthetase family. As to quaternary structure, homodimer.

It is found in the cytoplasm. It carries out the reaction (R)-pantoate + beta-alanine + ATP = (R)-pantothenate + AMP + diphosphate + H(+). The protein operates within cofactor biosynthesis; (R)-pantothenate biosynthesis; (R)-pantothenate from (R)-pantoate and beta-alanine: step 1/1. In terms of biological role, catalyzes the condensation of pantoate with beta-alanine in an ATP-dependent reaction via a pantoyl-adenylate intermediate. This is Pantothenate synthetase from Coxiella burnetii (strain Dugway 5J108-111).